A 432-amino-acid chain; its full sequence is Trigger factor (432 aa).

Residues Gly163 to Pro248 form the PPIase FKBP-type domain.

This sequence belongs to the FKBP-type PPIase family. Tig subfamily.

The protein resides in the cytoplasm. It catalyses the reaction [protein]-peptidylproline (omega=180) = [protein]-peptidylproline (omega=0). Functionally, involved in protein export. Acts as a chaperone by maintaining the newly synthesized protein in an open conformation. Functions as a peptidyl-prolyl cis-trans isomerase. In Nitratidesulfovibrio vulgaris (strain DSM 19637 / Miyazaki F) (Desulfovibrio vulgaris), this protein is Trigger factor.